Here is a 1375-residue protein sequence, read N- to C-terminus: Capping protein, Arp2/3 and myosin-I linker protein 3 (1375 aa).

The tract at residues I124–S151 is disordered. Positions T138–S151 are enriched in low complexity. 10 LRR repeats span residues S244–A264, V274–Q295, G303–G323, S335–Y357, A365–L386, H392–P413, T424–L444, D455–E475, C482–V501, and S509–L530. Disordered stretches follow at residues R864–I901 and K969–D1375. Pro residues predominate over residues P981–G997. Positions R1007–D1022 are enriched in basic and acidic residues. A compositionally biased stretch (basic residues) spans Q1047–S1062. A compositionally biased stretch (pro residues) spans L1078–P1097. Over residues S1098 to S1108 the composition is skewed to low complexity. The span at R1219–E1229 shows a compositional bias: basic and acidic residues. Residues A1233–S1244 show a composition bias toward polar residues. Residues P1272–V1281 show a composition bias toward pro residues. Positions Q1348–P1360 are enriched in basic and acidic residues.

Belongs to the CARMIL family.

It localises to the cytoplasm. It is found in the cell membrane. This chain is Capping protein, Arp2/3 and myosin-I linker protein 3 (Carmil3), found in Mus musculus (Mouse).